A 200-amino-acid chain; its full sequence is Proteasome subunit beta 2 (200 aa).

Residues 1–7 (METKKTG) constitute a propeptide, removed in mature form; by autocatalysis. Thr-8 serves as the catalytic Nucleophile.

The protein belongs to the peptidase T1B family. As to quaternary structure, the 20S proteasome core is composed of 14 alpha and 14 beta subunits that assemble into four stacked heptameric rings, resulting in a barrel-shaped structure. The two inner rings, each composed of seven catalytic beta subunits, are sandwiched by two outer rings, each composed of seven alpha subunits. The catalytic chamber with the active sites is on the inside of the barrel. Has a gated structure, the ends of the cylinder being occluded by the N-termini of the alpha-subunits. Is capped at one or both ends by the proteasome regulatory ATPase, PAN.

Its subcellular location is the cytoplasm. It carries out the reaction Cleavage of peptide bonds with very broad specificity.. With respect to regulation, the formation of the proteasomal ATPase PAN-20S proteasome complex, via the docking of the C-termini of PAN into the intersubunit pockets in the alpha-rings, triggers opening of the gate for substrate entry. Interconversion between the open-gate and close-gate conformations leads to a dynamic regulation of the 20S proteasome proteolysis activity. Its function is as follows. Component of the proteasome core, a large protease complex with broad specificity involved in protein degradation. The chain is Proteasome subunit beta 2 from Thermococcus onnurineus (strain NA1).